A 211-amino-acid chain; its full sequence is Uracil phosphoribosyltransferase (211 aa).

5-phospho-alpha-D-ribose 1-diphosphate-binding positions include Arg-78, Arg-103, and 130 to 138; that span reads DPMLATGAT. Uracil contacts are provided by residues Ile-195 and 200 to 202; that span reads GDA. A 5-phospho-alpha-D-ribose 1-diphosphate-binding site is contributed by Asp-201.

This sequence belongs to the UPRTase family. It depends on Mg(2+) as a cofactor.

It catalyses the reaction UMP + diphosphate = 5-phospho-alpha-D-ribose 1-diphosphate + uracil. The protein operates within pyrimidine metabolism; UMP biosynthesis via salvage pathway; UMP from uracil: step 1/1. With respect to regulation, allosterically activated by GTP. Its function is as follows. Catalyzes the conversion of uracil and 5-phospho-alpha-D-ribose 1-diphosphate (PRPP) to UMP and diphosphate. The protein is Uracil phosphoribosyltransferase of Renibacterium salmoninarum (strain ATCC 33209 / DSM 20767 / JCM 11484 / NBRC 15589 / NCIMB 2235).